The primary structure comprises 130 residues: Small ribosomal subunit protein uS11c (130 aa).

The protein belongs to the universal ribosomal protein uS11 family. As to quaternary structure, part of the 30S ribosomal subunit.

It localises to the plastid. It is found in the chloroplast. This Nephroselmis olivacea (Green alga) protein is Small ribosomal subunit protein uS11c.